We begin with the raw amino-acid sequence, 382 residues long: Dual-specificity RNA methyltransferase RlmN (382 aa).

The active-site Proton acceptor is Glu94. The region spanning 100–336 (EANRGTLCVS…NTITRKTRGD (237 aa)) is the Radical SAM core domain. Cys107 and Cys342 are disulfide-bonded. [4Fe-4S] cluster-binding residues include Cys114, Cys118, and Cys121. S-adenosyl-L-methionine is bound by residues 168-169 (GE), Ser200, 222-224 (SLH), and Asn299. The S-methylcysteine intermediate role is filled by Cys342.

The protein belongs to the radical SAM superfamily. RlmN family. The cofactor is [4Fe-4S] cluster.

Its subcellular location is the cytoplasm. It catalyses the reaction adenosine(2503) in 23S rRNA + 2 reduced [2Fe-2S]-[ferredoxin] + 2 S-adenosyl-L-methionine = 2-methyladenosine(2503) in 23S rRNA + 5'-deoxyadenosine + L-methionine + 2 oxidized [2Fe-2S]-[ferredoxin] + S-adenosyl-L-homocysteine. The enzyme catalyses adenosine(37) in tRNA + 2 reduced [2Fe-2S]-[ferredoxin] + 2 S-adenosyl-L-methionine = 2-methyladenosine(37) in tRNA + 5'-deoxyadenosine + L-methionine + 2 oxidized [2Fe-2S]-[ferredoxin] + S-adenosyl-L-homocysteine. Functionally, specifically methylates position 2 of adenine 2503 in 23S rRNA and position 2 of adenine 37 in tRNAs. m2A2503 modification seems to play a crucial role in the proofreading step occurring at the peptidyl transferase center and thus would serve to optimize ribosomal fidelity. In Legionella pneumophila (strain Lens), this protein is Dual-specificity RNA methyltransferase RlmN.